The sequence spans 203 residues: Endo-type membrane-bound lytic murein transglycosylase A (203 aa).

Positions 1 to 15 (MKLRWLMWLVVFLAG) are cleaved as a signal peptide. Cys-16 carries the N-palmitoyl cysteine lipid modification. Cys-16 carries S-diacylglycerol cysteine lipidation.

It belongs to the transglycosylase Slt family.

Its subcellular location is the cell outer membrane. The catalysed reaction is Endolytic cleavage of the (1-&gt;4)-beta-glycosidic linkage between N-acetylmuramic acid (MurNAc) and N-acetylglucosamine (GlcNAc) residues in peptidoglycan with concomitant formation of a 1,6-anhydrobond in the MurNAc residue.. Functionally, murein-degrading enzyme. May play a role in recycling of muropeptides during cell elongation and/or cell division. Preferentially cleaves at a distance of more than two disaccharide units from the ends of the glycan chain. The protein is Endo-type membrane-bound lytic murein transglycosylase A of Cronobacter sakazakii (strain ATCC BAA-894) (Enterobacter sakazakii).